A 511-amino-acid polypeptide reads, in one-letter code: Intermediate cleaving peptidase 55 (511 aa).

The Mn(2+) site is built by Asp-327, Asp-338, His-417, Glu-444, and Glu-467.

Belongs to the peptidase M24B family. Mn(2+) is required as a cofactor.

The protein localises to the nucleus. Its subcellular location is the mitochondrion inner membrane. It carries out the reaction The enzyme cleaves the 36-Pro-Pro-37 bond of cysteine desulfurase (EC 2.8.1.7) removing three amino acid residues (Tyr-Ser-Pro) from the N-terminus after cleavage by mitochondrial processing peptidase.. Functionally, aminopeptidase which cleaves preprotein intermediates that carry destabilizing N-ter amino acid residues after the mitochondrial processing peptidase (MPP) cleavage site and is thus critical for stabilization of the mitochondrial proteome. This Saccharomyces cerevisiae (strain ATCC 204508 / S288c) (Baker's yeast) protein is Intermediate cleaving peptidase 55 (ICP55).